A 459-amino-acid polypeptide reads, in one-letter code: ATP synthase subunit beta (459 aa).

148 to 155 (GGAGVGKT) is an ATP binding site.

The protein belongs to the ATPase alpha/beta chains family. F-type ATPases have 2 components, CF(1) - the catalytic core - and CF(0) - the membrane proton channel. CF(1) has five subunits: alpha(3), beta(3), gamma(1), delta(1), epsilon(1). CF(0) has three main subunits: a(1), b(2) and c(9-12). The alpha and beta chains form an alternating ring which encloses part of the gamma chain. CF(1) is attached to CF(0) by a central stalk formed by the gamma and epsilon chains, while a peripheral stalk is formed by the delta and b chains.

The protein resides in the cell inner membrane. The catalysed reaction is ATP + H2O + 4 H(+)(in) = ADP + phosphate + 5 H(+)(out). Functionally, produces ATP from ADP in the presence of a proton gradient across the membrane. The catalytic sites are hosted primarily by the beta subunits. The sequence is that of ATP synthase subunit beta from Burkholderia mallei (strain NCTC 10229).